The primary structure comprises 1295 residues: Phosphoribosylformylglycinamidine synthase (1295 aa).

The disordered stretch occupies residues 304 to 326; the sequence is WPGAATGSGGEIRDEGATGRGAK. Residues 306-317, 385-387, and A677 each bind ATP; these read GAATGSGGEIRD and TGY. Residues D678, E717, N721, and D884 each contribute to the Mg(2+) site. The segment covering 995-1012 has biased composition (basic and acidic residues); sequence LRDNPESADQEHASRQDD. The interval 995-1017 is disordered; it reads LRDNPESADQEHASRQDDNDPGL. Residues 1042–1295 enclose the Glutamine amidotransferase type-1 domain; the sequence is VAVLREQGVN…LFRNARKQLG (254 aa). C1135 serves as the catalytic Nucleophile. Residues H1260 and E1262 contribute to the active site.

The protein in the N-terminal section; belongs to the FGAMS family. Monomer.

The protein localises to the cytoplasm. The catalysed reaction is N(2)-formyl-N(1)-(5-phospho-beta-D-ribosyl)glycinamide + L-glutamine + ATP + H2O = 2-formamido-N(1)-(5-O-phospho-beta-D-ribosyl)acetamidine + L-glutamate + ADP + phosphate + H(+). The protein operates within purine metabolism; IMP biosynthesis via de novo pathway; 5-amino-1-(5-phospho-D-ribosyl)imidazole from N(2)-formyl-N(1)-(5-phospho-D-ribosyl)glycinamide: step 1/2. In terms of biological role, phosphoribosylformylglycinamidine synthase involved in the purines biosynthetic pathway. Catalyzes the ATP-dependent conversion of formylglycinamide ribonucleotide (FGAR) and glutamine to yield formylglycinamidine ribonucleotide (FGAM) and glutamate. This is Phosphoribosylformylglycinamidine synthase from Sodalis glossinidius (strain morsitans).